The primary structure comprises 288 residues: Bifunctional protein FolD (288 aa).

Residues 164–166 (GRS) and Val230 contribute to the NADP(+) site.

This sequence belongs to the tetrahydrofolate dehydrogenase/cyclohydrolase family. Homodimer.

The enzyme catalyses (6R)-5,10-methylene-5,6,7,8-tetrahydrofolate + NADP(+) = (6R)-5,10-methenyltetrahydrofolate + NADPH. It carries out the reaction (6R)-5,10-methenyltetrahydrofolate + H2O = (6R)-10-formyltetrahydrofolate + H(+). Its pathway is one-carbon metabolism; tetrahydrofolate interconversion. Functionally, catalyzes the oxidation of 5,10-methylenetetrahydrofolate to 5,10-methenyltetrahydrofolate and then the hydrolysis of 5,10-methenyltetrahydrofolate to 10-formyltetrahydrofolate. In Thermomicrobium roseum (strain ATCC 27502 / DSM 5159 / P-2), this protein is Bifunctional protein FolD.